We begin with the raw amino-acid sequence, 286 residues long: Bark leucoagglutinin (286 aa).

Residues 1-28 form the signal peptide; that stretch reads ATSNSKPTQVLLATFLTFFFLLLNNVNS. Residue Y73 participates in N-acetyl-alpha-neuraminyl-(2-&gt;3)-beta-D-galactosyl-(1-&gt;4)-beta-D-glucose binding. An N-linked (GlcNAc...) asparagine glycan is attached at N89. Residues D115 and K135 each contribute to the N-acetyl-alpha-neuraminyl-(2-&gt;3)-beta-D-galactosyl-(1-&gt;4)-beta-D-glucose site. N-linked (GlcNAc...) asparagine glycosylation is present at N141. 2 residues coordinate Mn(2+): E155 and D157. 4 residues coordinate Ca(2+): D157, Y159, D165, and D168. Residues Y159 and D165 each coordinate N-acetyl-alpha-neuraminyl-(2-&gt;3)-beta-D-galactosyl-(1-&gt;4)-beta-D-glucose. The Mn(2+) site is built by D168 and H173. N207 and N219 each carry an N-linked (GlcNAc...) asparagine glycan. Residues 278–286 constitute a propeptide, removed in mature form; that stretch reads NVHIARYTA.

The protein belongs to the leguminous lectin family.

In terms of biological role, sialic acid-binding lectin specifically recognizing the trisaccharide sequence Neu5Ac/Gc-alpha-2,3-Gal-beta-1,4-GlcNAc/Glc. In Maackia amurensis (Amur maackia), this protein is Bark leucoagglutinin.